The primary structure comprises 490 residues: V-type proton ATPase subunit B (490 aa).

ATP is bound at residue R380.

The protein belongs to the ATPase alpha/beta chains family. As to quaternary structure, V-ATPase is a heteromultimeric enzyme made up of two complexes: the ATP-hydrolytic V1 complex and the proton translocation V0 complex. The V1 complex consists of three catalytic AB heterodimers that form a heterohexamer, three peripheral stalks each consisting of EG heterodimers, one central rotor including subunits D and F, and the regulatory subunits C and H. The proton translocation complex V0 consists of the proton transport subunit a, a ring of proteolipid subunits c9c'', rotary subunit d, subunits e and f, and the accessory subunits VhaAC45 and ATP6AP2. In terms of tissue distribution, expressed in Malpighian tubules, rectum, antennal palps and oviduct.

Functionally, non-catalytic subunit of the V1 complex of vacuolar(H+)-ATPase (V-ATPase), a multisubunit enzyme composed of a peripheral complex (V1) that hydrolyzes ATP and a membrane integral complex (V0) that translocates protons. V-ATPase is responsible for acidifying and maintaining the pH of intracellular compartments and in some cell types, is targeted to the plasma membrane, where it is responsible for acidifying the extracellular environment. Essential for the proper assembly and activity of V-ATPase. The chain is V-type proton ATPase subunit B (Vha55) from Drosophila melanogaster (Fruit fly).